Consider the following 617-residue polypeptide: MKRNLLFIILLLLLPGLHQVFATSTIKKVAPTFWWAGMKNPELQILLYGDRISSADVSLSADNITLQEVVKQENPNYLVLYLDLSKAAPQNFDIILKQGKKQTKIPYELKQRRPNASAVEGFDSSDVLYLIMPDRFANGNPSNDIIPGMLEGNVDRNEPFARHGGDLKGIENHLDYIADLGVTSIWLNPIQENDMKEGSYHGYAITDYYQVDRRFGSNEEFRKLTQEANAKGLKVVMDMIFNHCGSDNYLFKDMPSKDWFNFEGNYVQTSFKTATQMDPYASDYEKKIAIDGWFTLTMPDFNQRNRHVATYLIQSSIWWIEYAGINGIRQDTHPYADFDMMARWCKAVNEEYPKFNIVGETWLGNNVLISYWQKDSRLAYPKNSNLPTVMDFPLMEEMNKAFDEETTEWNGGLFRLYEYLSQDIVYSHPMSLLTFLDNHDTSRFYRSEADTKNLDRYKQALTFLLTTRGIPQIYYGTEILMAADKANGDGLLRCDFPGGWPNDTKNCFDAANRTPQQNEAFSFMQKLLQWRKGNEVIAKGQLKHFAPNKGVYVYERKYGDKSVVVFLNGNDREQTIDLVPYQEILPASSAFDLLTEKKVELRNELTLPSREIYLLSF.

An N-terminal signal peptide occupies residues 1 to 22 (MKRNLLFIILLLLLPGLHQVFA). The Ca(2+) site is built by N138, N143, D144, G164, and D166. Active-site residues include D331 and E360.

It belongs to the glycosyl hydrolase 13 family. Requires Ca(2+) as cofactor.

Its subcellular location is the periplasm. It carries out the reaction Hydrolysis of pullulan to panose (6-alpha-D-glucosylmaltose).. Its pathway is glycan degradation; starch degradation. Neopullulanase that cleaves 1,4-alpha-glucosidic linkages in starch to produce disaccharides or trisaccharides in starch degradation. This is Neopullulanase SusA (susA) from Bacteroides thetaiotaomicron (strain ATCC 29148 / DSM 2079 / JCM 5827 / CCUG 10774 / NCTC 10582 / VPI-5482 / E50).